The chain runs to 95 residues: MSLRPLQDRILVERVQETEKTKGGIIIPDTAKEKPAEGKVVASGNGRVGEDGKLIPMDLKVGDTILFSKYGGTEVKIDGTDYLIMRQDDVLGVIE.

This sequence belongs to the GroES chaperonin family. Heptamer of 7 subunits arranged in a ring. Interacts with the chaperonin GroEL.

The protein resides in the cytoplasm. Its function is as follows. Together with the chaperonin GroEL, plays an essential role in assisting protein folding. The GroEL-GroES system forms a nano-cage that allows encapsulation of the non-native substrate proteins and provides a physical environment optimized to promote and accelerate protein folding. GroES binds to the apical surface of the GroEL ring, thereby capping the opening of the GroEL channel. The chain is Co-chaperonin GroES from Desulforapulum autotrophicum (strain ATCC 43914 / DSM 3382 / VKM B-1955 / HRM2) (Desulfobacterium autotrophicum).